A 153-amino-acid polypeptide reads, in one-letter code: Regulatory protein RecX (153 aa).

This sequence belongs to the RecX family.

Its subcellular location is the cytoplasm. Modulates RecA activity. The chain is Regulatory protein RecX from Syntrophotalea carbinolica (strain DSM 2380 / NBRC 103641 / GraBd1) (Pelobacter carbinolicus).